We begin with the raw amino-acid sequence, 373 residues long: Anhydro-N-acetylmuramic acid kinase (373 aa).

12–19 lines the ATP pocket; the sequence is GTSLDGVD.

It belongs to the anhydro-N-acetylmuramic acid kinase family.

It carries out the reaction 1,6-anhydro-N-acetyl-beta-muramate + ATP + H2O = N-acetyl-D-muramate 6-phosphate + ADP + H(+). Its pathway is amino-sugar metabolism; 1,6-anhydro-N-acetylmuramate degradation. It functions in the pathway cell wall biogenesis; peptidoglycan recycling. In terms of biological role, catalyzes the specific phosphorylation of 1,6-anhydro-N-acetylmuramic acid (anhMurNAc) with the simultaneous cleavage of the 1,6-anhydro ring, generating MurNAc-6-P. Is required for the utilization of anhMurNAc either imported from the medium or derived from its own cell wall murein, and thus plays a role in cell wall recycling. The chain is Anhydro-N-acetylmuramic acid kinase from Salmonella paratyphi A (strain ATCC 9150 / SARB42).